A 515-amino-acid polypeptide reads, in one-letter code: Maturase K (515 aa).

Belongs to the intron maturase 2 family. MatK subfamily.

The protein resides in the plastid. It localises to the chloroplast. Its function is as follows. Usually encoded in the trnK tRNA gene intron. Probably assists in splicing its own and other chloroplast group II introns. The polypeptide is Maturase K (Cedrus atlantica (Atlas cedar)).